A 455-amino-acid chain; its full sequence is Bifunctional protein GlmU (455 aa).

The segment at 1–226 (MSLDIVILAA…PMEVQGANDR (226 aa)) is pyrophosphorylase. UDP-N-acetyl-alpha-D-glucosamine is bound by residues 8–11 (LAAG), lysine 22, glutamine 73, 78–79 (GT), 99–101 (YGD), glycine 136, glutamate 151, asparagine 166, and asparagine 224. Aspartate 101 is a Mg(2+) binding site. Residue asparagine 224 coordinates Mg(2+). The segment at 227 to 247 (RQLSELERHYQLREGRRLMAQ) is linker. The segment at 248–455 (GVTLRDPARF…WKRPEKIKKS (208 aa)) is N-acetyltransferase. Positions 330 and 348 each coordinate UDP-N-acetyl-alpha-D-glucosamine. Histidine 360 (proton acceptor) is an active-site residue. Tyrosine 363 and asparagine 374 together coordinate UDP-N-acetyl-alpha-D-glucosamine. Residues alanine 377, 383–384 (NY), serine 402, alanine 420, and arginine 437 each bind acetyl-CoA.

The protein in the N-terminal section; belongs to the N-acetylglucosamine-1-phosphate uridyltransferase family. It in the C-terminal section; belongs to the transferase hexapeptide repeat family. Homotrimer. Mg(2+) serves as cofactor.

Its subcellular location is the cytoplasm. The enzyme catalyses alpha-D-glucosamine 1-phosphate + acetyl-CoA = N-acetyl-alpha-D-glucosamine 1-phosphate + CoA + H(+). It catalyses the reaction N-acetyl-alpha-D-glucosamine 1-phosphate + UTP + H(+) = UDP-N-acetyl-alpha-D-glucosamine + diphosphate. It functions in the pathway nucleotide-sugar biosynthesis; UDP-N-acetyl-alpha-D-glucosamine biosynthesis; N-acetyl-alpha-D-glucosamine 1-phosphate from alpha-D-glucosamine 6-phosphate (route II): step 2/2. Its pathway is nucleotide-sugar biosynthesis; UDP-N-acetyl-alpha-D-glucosamine biosynthesis; UDP-N-acetyl-alpha-D-glucosamine from N-acetyl-alpha-D-glucosamine 1-phosphate: step 1/1. It participates in bacterial outer membrane biogenesis; LPS lipid A biosynthesis. Its function is as follows. Catalyzes the last two sequential reactions in the de novo biosynthetic pathway for UDP-N-acetylglucosamine (UDP-GlcNAc). The C-terminal domain catalyzes the transfer of acetyl group from acetyl coenzyme A to glucosamine-1-phosphate (GlcN-1-P) to produce N-acetylglucosamine-1-phosphate (GlcNAc-1-P), which is converted into UDP-GlcNAc by the transfer of uridine 5-monophosphate (from uridine 5-triphosphate), a reaction catalyzed by the N-terminal domain. The protein is Bifunctional protein GlmU of Pseudomonas entomophila (strain L48).